We begin with the raw amino-acid sequence, 1588 residues long: Multicopy suppressor of chk1 protein 1 (1588 aa).

Residues 38 to 60 (HAKPSTQQQQQQQNISNETTSTG) form a disordered region. Polar residues predominate over residues 51-60 (NISNETTSTG). The 43-residue stretch at 82–124 (NVRVTPKKEEFSRGLDFISDLYDQTARKSGAVRVIPPDNWKCP) folds into the JmjN domain. The PHD-type 1 zinc-finger motif lies at 298-345 (KCKLCAQEGSSLVTCCICQSNYHYACVEAPFAPFSDIHYWTCNSCIPS). The span at 385-395 (PLTLPSNTKTP) shows a compositional bias: polar residues. The disordered stretch occupies residues 385 to 412 (PLTLPSNTKTPPASARQSSRRTRSTSGK). The JmjC domain occupies 475-645 (FPTSRQNAYY…DMHAENSFNM (171 aa)). Positions 848–872 (EKRKPKRGSATHSHLESPSEEVEDL) are disordered. The PHD-type 2 zinc-finger motif lies at 1171–1220 (FHYCFCRQPEAGMMIECELCHEWYHAKCMKMSKKKLRADEKFICPICDYR). A disordered region spans residues 1319 to 1341 (APQPPPFIGESRSNRKPRPTKRQ). The PHD-type 3 zinc-finger motif lies at 1454-1505 (SVICLCRQPFAISDGTVQCHNCLEWFHYECVGLSSDIVSTLSNYACPDCCSK).

Its subcellular location is the nucleus. Functionally, has a role in regulating chromatin structure via global deacetylation of histone H3. This function is associated with the activity of a histone deacetylase. The protein is Multicopy suppressor of chk1 protein 1 (msc1) of Schizosaccharomyces pombe (strain 972 / ATCC 24843) (Fission yeast).